Consider the following 329-residue polypeptide: Ribosomal RNA small subunit methyltransferase H (329 aa).

S-adenosyl-L-methionine contacts are provided by residues 44-46 (GGY), D62, D110, and Q117. A disordered region spans residues 297–329 (APAELAANPRARSARLRSAERTSAPARRLGDAA).

It belongs to the methyltransferase superfamily. RsmH family.

It is found in the cytoplasm. It catalyses the reaction cytidine(1402) in 16S rRNA + S-adenosyl-L-methionine = N(4)-methylcytidine(1402) in 16S rRNA + S-adenosyl-L-homocysteine + H(+). Specifically methylates the N4 position of cytidine in position 1402 (C1402) of 16S rRNA. The protein is Ribosomal RNA small subunit methyltransferase H of Rhodospirillum centenum (strain ATCC 51521 / SW).